The chain runs to 183 residues: Ribosome maturation factor RimM (183 aa).

The PRC barrel domain occupies 102-183 (DDDFYWHQLE…CITVDWDPEF (82 aa)).

The protein belongs to the RimM family. As to quaternary structure, binds ribosomal protein uS19.

The protein resides in the cytoplasm. In terms of biological role, an accessory protein needed during the final step in the assembly of 30S ribosomal subunit, possibly for assembly of the head region. Essential for efficient processing of 16S rRNA. May be needed both before and after RbfA during the maturation of 16S rRNA. It has affinity for free ribosomal 30S subunits but not for 70S ribosomes. This Saccharophagus degradans (strain 2-40 / ATCC 43961 / DSM 17024) protein is Ribosome maturation factor RimM.